A 249-amino-acid chain; its full sequence is O-methyltransferase adaD (249 aa).

Positions 1 to 15 are enriched in low complexity; sequence MSSVTLTTTTTTTST. The disordered stretch occupies residues 1–26; it reads MSSVTLTTTTTTTSTPPKPTPKDEPQ.

The protein belongs to the methyltransferase superfamily.

The catalysed reaction is 2-acetyl-3,4a,8,10,11,12a-hexahydroxy-1,4,4a,5,12,12a-hexahydrotetracene-1,12-dione + S-adenosyl-L-methionine = TAN-1612 + S-adenosyl-L-homocysteine + H(+). It participates in secondary metabolite biosynthesis. O-methyltransferase; part of the gene cluster that mediates the biosynthesis of the linear tetracyclic TAN-1612 neuropeptide Y receptor antagonist. The decaketide backbone of TAN-1612 is synthesized by the non-reducing polyketide synthase adaA via condensation of one acetyl-CoA starter unit with 9 malonyl-CoA units. The FAD-dependent monooxygenase adaC then performs hydroxylation at C2 while the polaketide chain is still attached to the NRPKS adaA. The alpha-hydroxylation step at C2 appears to be crucial for the following C18-C1 Claisen cyclization and release of the C9-hydroxyl version of TAN-1612 from the NRPKS adaA, two steps performed by the lactamase-like protein adaB. Finally, the O-methyltransferase adaD performs the C9 O-methylation to complete the biosynthesis of TAN-1612. This chain is O-methyltransferase adaD, found in Aspergillus niger.